Here is a 212-residue protein sequence, read N- to C-terminus: MSSKYIVIEGLEGAGKTTARNLVVETLKSLGVTDMTFTREPGGTVLAEKLRSLVLDIKSVGDEVITDNAEVLLFYAARVQLVETVIKPALARGEWVIGDRHDLSTQAYQGGGRGIDRQLLATLRQAVLGDFAPDLTLYLDVDPRIGLERARARGELDRIEQESLDFFNRTRARYLELAAADPRIITIDACQPLEAVSHDIRATVTRWVQEQQ.

10–17 (GLEGAGKT) is an ATP binding site.

This sequence belongs to the thymidylate kinase family.

It catalyses the reaction dTMP + ATP = dTDP + ADP. Its function is as follows. Phosphorylation of dTMP to form dTDP in both de novo and salvage pathways of dTTP synthesis. The protein is Thymidylate kinase of Cronobacter sakazakii (strain ATCC BAA-894) (Enterobacter sakazakii).